We begin with the raw amino-acid sequence, 418 residues long: Serine hydroxymethyltransferase (418 aa).

(6S)-5,6,7,8-tetrahydrofolate is bound by residues leucine 121 and 125-127 (GHL). Position 230 is an N6-(pyridoxal phosphate)lysine (lysine 230). 356–358 (SPF) lines the (6S)-5,6,7,8-tetrahydrofolate pocket.

The protein belongs to the SHMT family. In terms of assembly, homodimer. The cofactor is pyridoxal 5'-phosphate.

Its subcellular location is the cytoplasm. It carries out the reaction (6R)-5,10-methylene-5,6,7,8-tetrahydrofolate + glycine + H2O = (6S)-5,6,7,8-tetrahydrofolate + L-serine. It participates in one-carbon metabolism; tetrahydrofolate interconversion. Its pathway is amino-acid biosynthesis; glycine biosynthesis; glycine from L-serine: step 1/1. Functionally, catalyzes the reversible interconversion of serine and glycine with tetrahydrofolate (THF) serving as the one-carbon carrier. This reaction serves as the major source of one-carbon groups required for the biosynthesis of purines, thymidylate, methionine, and other important biomolecules. Also exhibits THF-independent aldolase activity toward beta-hydroxyamino acids, producing glycine and aldehydes, via a retro-aldol mechanism. This Alteromonas mediterranea (strain DSM 17117 / CIP 110805 / LMG 28347 / Deep ecotype) protein is Serine hydroxymethyltransferase.